The sequence spans 238 residues: Ribonuclease PH (238 aa).

Phosphate contacts are provided by residues Arg-86 and 124 to 126; that span reads GTR.

This sequence belongs to the RNase PH family. Homohexameric ring arranged as a trimer of dimers.

It catalyses the reaction tRNA(n+1) + phosphate = tRNA(n) + a ribonucleoside 5'-diphosphate. Its function is as follows. Phosphorolytic 3'-5' exoribonuclease that plays an important role in tRNA 3'-end maturation. Removes nucleotide residues following the 3'-CCA terminus of tRNAs; can also add nucleotides to the ends of RNA molecules by using nucleoside diphosphates as substrates, but this may not be physiologically important. Probably plays a role in initiation of 16S rRNA degradation (leading to ribosome degradation) during starvation. In Salmonella choleraesuis (strain SC-B67), this protein is Ribonuclease PH.